The following is a 1749-amino-acid chain: E3 ubiquitin-protein ligase UBR1 (1749 aa).

Alanine 2 is subject to N-acetylalanine. The residue at position 21 (threonine 21) is a Phosphothreonine. A UBR-type zinc finger spans residues 97–168 (QLCGRVFKSG…TGPFCVNHEP (72 aa)). Residues cysteine 99, cysteine 112, cysteine 115, cysteine 124, cysteine 127, histidine 133, and histidine 136 each coordinate Zn(2+). Phenylalanine 148 serves as a coordination point for a peptide. Position 149 (cysteine 149) interacts with Zn(2+). Aspartate 150 contacts a peptide. Cysteine 151 serves as a coordination point for Zn(2+). An a peptide-binding site is contributed by aspartate 153. Zn(2+)-binding residues include cysteine 163 and histidine 166. The disordered stretch occupies residues 842 to 868 (QHSKAEHMQKKRRKQENKDEALPPPPP). Residues 1019–1054 (RKRKAEAARLHRQKIMAQMSALQKNFIETHKLMYDN) are UBC2-binding region (U2BR). The Zn(2+) site is built by cysteine 1098, cysteine 1101, cysteine 1159, histidine 1161, histidine 1164, and cysteine 1167. Residues 1098–1201 (CILCQEEQEV…SGEYLCPLCK (104 aa)) form an RING-type; atypical zinc finger. A Phosphoserine modification is found at serine 1179. 5 residues coordinate Zn(2+): cysteine 1197, cysteine 1200, cysteine 1627, cysteine 1630, and cysteine 1653.

It belongs to the E3 ubiquitin-protein ligase UBR1-like family. Interacts with RECQL4. Broadly expressed, with highest levels in skeletal muscle, kidney and pancreas. Present in acinar cells of the pancreas (at protein level).

The protein localises to the cytoplasm. The protein resides in the cytosol. It catalyses the reaction S-ubiquitinyl-[E2 ubiquitin-conjugating enzyme]-L-cysteine + [acceptor protein]-L-lysine = [E2 ubiquitin-conjugating enzyme]-L-cysteine + N(6)-ubiquitinyl-[acceptor protein]-L-lysine.. It participates in protein modification; protein ubiquitination. Inhibited by the small-molecule compound RF-C11, which bears two heterovalent ligands: RF-C11 inhibits activity toward both type-1 and type-2 N-degrons. In terms of biological role, E3 ubiquitin-protein ligase which is a component of the N-end rule pathway. Recognizes and binds proteins bearing specific N-terminal residues that are destabilizing according to the N-end rule, leading to their ubiquitination and subsequent degradation. Recognizes both type-1 and type-2 N-degrons, containing positively charged amino acids (Arg, Lys and His) and bulky and hydrophobic amino acids, respectively. Does not ubiquitinate proteins that are acetylated at the N-terminus. In contrast, it strongly binds methylated N-degrons. Binds leucine and is a negative regulator of the leucine-mTOR signaling pathway, thereby controlling cell growth. In Homo sapiens (Human), this protein is E3 ubiquitin-protein ligase UBR1.